The sequence spans 324 residues: Ribosomal RNA small subunit methyltransferase H (324 aa).

S-adenosyl-L-methionine contacts are provided by residues 35-37 (GGH), D55, F85, D103, and Q110.

It belongs to the methyltransferase superfamily. RsmH family.

It localises to the cytoplasm. It carries out the reaction cytidine(1402) in 16S rRNA + S-adenosyl-L-methionine = N(4)-methylcytidine(1402) in 16S rRNA + S-adenosyl-L-homocysteine + H(+). Its function is as follows. Specifically methylates the N4 position of cytidine in position 1402 (C1402) of 16S rRNA. The chain is Ribosomal RNA small subunit methyltransferase H from Solidesulfovibrio magneticus (strain ATCC 700980 / DSM 13731 / RS-1) (Desulfovibrio magneticus).